Reading from the N-terminus, the 668-residue chain is Transketolase 1 (668 aa).

His-26 serves as a coordination point for substrate. Residues His-66 and 114–116 (GPL) contribute to the thiamine diphosphate site. Mg(2+) is bound at residue Asp-155. The thiamine diphosphate site is built by Gly-156 and Asn-185. Residues Asn-185 and Ile-187 each coordinate Mg(2+). Substrate is bound by residues His-261, Arg-358, and Ser-385. A thiamine diphosphate-binding site is contributed by His-261. The Proton donor role is filled by Glu-413. Position 439 (Phe-439) interacts with thiamine diphosphate. 3 residues coordinate substrate: His-463, Asp-471, and Arg-522.

Belongs to the transketolase family. In terms of assembly, homodimer. Requires Mg(2+) as cofactor. It depends on Ca(2+) as a cofactor. The cofactor is Mn(2+). Co(2+) is required as a cofactor. Thiamine diphosphate serves as cofactor.

It catalyses the reaction D-sedoheptulose 7-phosphate + D-glyceraldehyde 3-phosphate = aldehydo-D-ribose 5-phosphate + D-xylulose 5-phosphate. Functionally, catalyzes the transfer of a two-carbon ketol group from a ketose donor to an aldose acceptor, via a covalent intermediate with the cofactor thiamine pyrophosphate. This Pasteurella multocida (strain Pm70) protein is Transketolase 1 (tktA).